A 308-amino-acid chain; its full sequence is Olfactory receptor 4N5 (308 aa).

At 1–25 the chain is on the extracellular side; the sequence is METQNLTVVTEFILLGLTQSQDAQL. N-linked (GlcNAc...) asparagine glycosylation occurs at Asn-5. Residues 26–49 traverse the membrane as a helical segment; the sequence is LVFVLVLIFYLIILPGNFLIIFTI. Residues 50-57 lie on the Cytoplasmic side of the membrane; the sequence is KSDPGLTA. The chain crosses the membrane as a helical span at residues 58 to 79; sequence PLYFFLGNLALLDASYSFIVVP. Topologically, residues 80–100 are extracellular; that stretch reads RMLVDFLSEKKVISYRSCITQ. Cys-97 and Cys-189 are disulfide-bonded. The chain crosses the membrane as a helical span at residues 101–120; that stretch reads LFFLHFLGAGEMFLLVVMAF. Over 121–139 the chain is Cytoplasmic; sequence DRYIAICRPLHYSTIMNPR. The helical transmembrane segment at 140–158 threads the bilayer; that stretch reads ACYALSLVLWLGGFIHSIV. Topologically, residues 159–195 are extracellular; sequence QVALILHLPFCGPNQLDNFFCDVPQVIKLACTNTFVV. The chain crosses the membrane as a helical span at residues 196 to 219; sequence ELLMVSNSGLLSLLCFLGLLASYA. At 220-235 the chain is on the cytoplasmic side; the sequence is VILCRIREHSSEGKSK. Residues 236–258 form a helical membrane-spanning segment; the sequence is AISTCTTHIIIIFLMFGPAIFIY. The Extracellular segment spans residues 259–269; that stretch reads TCPFQAFPADK. Residues 270–289 form a helical membrane-spanning segment; sequence VVSLFHTVIFPLMNPVIYTL. The Cytoplasmic portion of the chain corresponds to 290–308; the sequence is RNQEVKASMRKLLSQHMFC.

This sequence belongs to the G-protein coupled receptor 1 family.

The protein resides in the cell membrane. In terms of biological role, odorant receptor. The chain is Olfactory receptor 4N5 (OR4N5) from Homo sapiens (Human).